A 98-amino-acid chain; its full sequence is MTLIHMNIFMAFTMSLTGFLMYRSHLMSALLCLEGMILSLFILVTLTVLNLHLTLAKMMPIILLVFAACEAAIGLALLVKISNTYGTDYVQNLNLLQC.

The next 3 helical transmembrane spans lie at 1–21, 29–49, and 59–79; these read MTLIHMNIFMAFTMSLTGFLM, ALLCLEGMILSLFILVTLTVL, and MPIILLVFAACEAAIGLALLV.

It belongs to the complex I subunit 4L family. In terms of assembly, core subunit of respiratory chain NADH dehydrogenase (Complex I) which is composed of 45 different subunits.

The protein resides in the mitochondrion inner membrane. It catalyses the reaction a ubiquinone + NADH + 5 H(+)(in) = a ubiquinol + NAD(+) + 4 H(+)(out). Functionally, core subunit of the mitochondrial membrane respiratory chain NADH dehydrogenase (Complex I) which catalyzes electron transfer from NADH through the respiratory chain, using ubiquinone as an electron acceptor. Part of the enzyme membrane arm which is embedded in the lipid bilayer and involved in proton translocation. This is NADH-ubiquinone oxidoreductase chain 4L (MT-ND4L) from Inia geoffrensis (Amazon river dolphin).